A 49-amino-acid polypeptide reads, in one-letter code: Small ribosomal subunit protein uS19c (49 aa).

The protein belongs to the universal ribosomal protein uS19 family.

It localises to the plastid. It is found in the chloroplast. In terms of biological role, protein S19 forms a complex with S13 that binds strongly to the 16S ribosomal RNA. The polypeptide is Small ribosomal subunit protein uS19c (rps19) (Sinapis alba (White mustard)).